The sequence spans 183 residues: Ribosome rescue factor SmrB (183 aa).

A Smr domain is found at 98–173 (LDLHGLTQLQ…GDAALLVLIE (76 aa)).

This sequence belongs to the SmrB family. Associates with collided ribosomes, but not with correctly translating polysomes.

Acts as a ribosome collision sensor. Detects stalled/collided disomes (pairs of ribosomes where the leading ribosome is stalled and a second ribosome has collided with it) and endonucleolytically cleaves mRNA at the 5' boundary of the stalled ribosome. Stalled/collided disomes form a new interface (primarily via the 30S subunits) that binds SmrB. Cleaved mRNA becomes available for tmRNA ligation, leading to ribosomal subunit dissociation and rescue of stalled ribosomes. The sequence is that of Ribosome rescue factor SmrB from Salmonella paratyphi A (strain ATCC 9150 / SARB42).